Consider the following 554-residue polypeptide: MRSDIIQKGYDKAPHRSLLRACGFKDEDFGKPIIGVANSYIDIVPGHVHLREFVEPIKEEIRKAGAIPVEFNTIGVDDGIAMGHYGMHYSLPSRELIADAIETVVEAHQLDGLICIPNCDKIVPGMLMGALRVNVPTVFISGGPMAAGKIGDKKVDLISVFEGVGKLNKGEITEKDLLVIEQNACPSCGSCSGLFTANSMNCLTEVLGLGLPGNGTTLAIDPRREMLARQAARQVVELVKIDLKPRDIVTKASFDNAFRVDIAMGGSSNTVLHLLAIAREAGIEYKMEDIDKISRETPTLCKISPSSDYHMDDLDRAGGISAIMKELLRNGLFDGKQRTVTTKTIEEIVKDVEIMDENVIRRIDNAYSKDGGLAILFGNLAPKGSVVKTAGVAKEMLQFKGKAICFDSEEEAIEGIRGGKVKPGHVVVIRYEGPKGGPGMREMLSPTSTIMGMGLGSSVALITDGRFSGGTRGACIGHISPEAAAGGPIGIVQDGDEILIDIPNRKLELLISQEEFDARLKAFKPKEKLIKSSWLKRYRKFVKDASEGAILSAD.

A Mg(2+)-binding site is contributed by D78. C119 provides a ligand contact to [2Fe-2S] cluster. Mg(2+)-binding residues include D120 and K121. K121 is subject to N6-carboxylysine. [2Fe-2S] cluster is bound at residue C191. Residue E442 coordinates Mg(2+). Residue S468 is the Proton acceptor of the active site.

It belongs to the IlvD/Edd family. Homodimer. It depends on [2Fe-2S] cluster as a cofactor. Mg(2+) serves as cofactor.

The enzyme catalyses (2R)-2,3-dihydroxy-3-methylbutanoate = 3-methyl-2-oxobutanoate + H2O. It carries out the reaction (2R,3R)-2,3-dihydroxy-3-methylpentanoate = (S)-3-methyl-2-oxopentanoate + H2O. It functions in the pathway amino-acid biosynthesis; L-isoleucine biosynthesis; L-isoleucine from 2-oxobutanoate: step 3/4. It participates in amino-acid biosynthesis; L-valine biosynthesis; L-valine from pyruvate: step 3/4. Functionally, functions in the biosynthesis of branched-chain amino acids. Catalyzes the dehydration of (2R,3R)-2,3-dihydroxy-3-methylpentanoate (2,3-dihydroxy-3-methylvalerate) into 2-oxo-3-methylpentanoate (2-oxo-3-methylvalerate) and of (2R)-2,3-dihydroxy-3-methylbutanoate (2,3-dihydroxyisovalerate) into 2-oxo-3-methylbutanoate (2-oxoisovalerate), the penultimate precursor to L-isoleucine and L-valine, respectively. The sequence is that of Dihydroxy-acid dehydratase from Hydrogenobaculum sp. (strain Y04AAS1).